We begin with the raw amino-acid sequence, 180 residues long: Protein sll1483 (180 aa).

An N-terminal signal peptide occupies residues 1 to 26 (MKTAARIVAFTALTGFALGMPTVAMA). The FAS1 domain occupies 45–176 (AMTIVEVAAG…GVIHVIDQVI (132 aa)).

This is Protein sll1483 from Synechocystis sp. (strain ATCC 27184 / PCC 6803 / Kazusa).